A 607-amino-acid polypeptide reads, in one-letter code: Translation initiation factor IF-2 (607 aa).

Residues 54-93 (SAPQAQDSTPVAETPAAAQPAAPQAASSQPAAAQAAQAVA) form a disordered region. The span at 62 to 93 (TPVAETPAAAQPAAPQAASSQPAAAQAAQAVA) shows a compositional bias: low complexity. The 174-residue stretch at 108–281 (HRAPVVTIMG…ELEDLRADPK (174 aa)) folds into the tr-type G domain. Positions 117-124 (GHVDHGKT) are G1. GTP is bound at residue 117 to 124 (GHVDHGKT). The tract at residues 142–146 (GITQH) is G2. The segment at 163–166 (DTPG) is G3. GTP-binding positions include 163-167 (DTPGH) and 217-220 (NKVD). The tract at residues 217–220 (NKVD) is G4. The interval 253-255 (SAK) is G5.

Belongs to the TRAFAC class translation factor GTPase superfamily. Classic translation factor GTPase family. IF-2 subfamily.

Its subcellular location is the cytoplasm. Its function is as follows. One of the essential components for the initiation of protein synthesis. Protects formylmethionyl-tRNA from spontaneous hydrolysis and promotes its binding to the 30S ribosomal subunits. Also involved in the hydrolysis of GTP during the formation of the 70S ribosomal complex. The chain is Translation initiation factor IF-2 from Deinococcus deserti (strain DSM 17065 / CIP 109153 / LMG 22923 / VCD115).